A 79-amino-acid chain; its full sequence is Small ribosomal subunit protein bS18 (79 aa).

This sequence belongs to the bacterial ribosomal protein bS18 family. Part of the 30S ribosomal subunit. Forms a tight heterodimer with protein bS6.

In terms of biological role, binds as a heterodimer with protein bS6 to the central domain of the 16S rRNA, where it helps stabilize the platform of the 30S subunit. The protein is Small ribosomal subunit protein bS18 of Afipia carboxidovorans (strain ATCC 49405 / DSM 1227 / KCTC 32145 / OM5) (Oligotropha carboxidovorans).